The primary structure comprises 252 residues: Segregation and condensation protein A (252 aa).

The disordered stretch occupies residues 117–136 (EREEERQNAFTKPPSDLSEF).

It belongs to the ScpA family. As to quaternary structure, component of a cohesin-like complex composed of ScpA, ScpB and the Smc homodimer, in which ScpA and ScpB bind to the head domain of Smc. The presence of the three proteins is required for the association of the complex with DNA.

It localises to the cytoplasm. Functionally, participates in chromosomal partition during cell division. May act via the formation of a condensin-like complex containing Smc and ScpB that pull DNA away from mid-cell into both cell halves. The polypeptide is Segregation and condensation protein A (Bacillus pumilus (strain SAFR-032)).